A 215-amino-acid polypeptide reads, in one-letter code: Probable transaldolase (215 aa).

K83 functions as the Schiff-base intermediate with substrate in the catalytic mechanism.

Belongs to the transaldolase family. Type 3B subfamily.

The protein resides in the cytoplasm. It carries out the reaction D-sedoheptulose 7-phosphate + D-glyceraldehyde 3-phosphate = D-erythrose 4-phosphate + beta-D-fructose 6-phosphate. It participates in carbohydrate degradation; pentose phosphate pathway; D-glyceraldehyde 3-phosphate and beta-D-fructose 6-phosphate from D-ribose 5-phosphate and D-xylulose 5-phosphate (non-oxidative stage): step 2/3. Functionally, transaldolase is important for the balance of metabolites in the pentose-phosphate pathway. The sequence is that of Probable transaldolase from Methanococcus maripaludis (strain C7 / ATCC BAA-1331).